The primary structure comprises 349 residues: Glycerol-3-phosphate dehydrogenase [NAD(+)], cytoplasmic (349 aa).

Residues 10–15 (GSGNWG), F41, and F97 contribute to the NAD(+) site. Position 120 (K120) interacts with substrate. A153 contributes to the NAD(+) binding site. Position 154 is a phosphoserine (S154). K204 functions as the Proton acceptor in the catalytic mechanism. An NAD(+)-binding site is contributed by R269. Position 269–270 (269–270 (RN)) interacts with substrate. At K289 the chain carries N6-succinyllysine. Residues K296 and Q298 each coordinate NAD(+). Y326 carries the phosphotyrosine modification.

This sequence belongs to the NAD-dependent glycerol-3-phosphate dehydrogenase family. Homodimer. As to expression, expressed in liver (at protein level).

Its subcellular location is the cytoplasm. The catalysed reaction is sn-glycerol 3-phosphate + NAD(+) = dihydroxyacetone phosphate + NADH + H(+). With respect to regulation, inhibited by zinc ions and sulfate. Its function is as follows. Has glycerol-3-phosphate dehydrogenase activity. This Homo sapiens (Human) protein is Glycerol-3-phosphate dehydrogenase [NAD(+)], cytoplasmic.